A 466-amino-acid chain; its full sequence is Uronate isomerase (466 aa).

This sequence belongs to the metallo-dependent hydrolases superfamily. Uronate isomerase family.

It carries out the reaction D-glucuronate = D-fructuronate. The catalysed reaction is aldehydo-D-galacturonate = keto-D-tagaturonate. The protein operates within carbohydrate metabolism; pentose and glucuronate interconversion. The protein is Uronate isomerase of Brucella suis (strain ATCC 23445 / NCTC 10510).